A 346-amino-acid chain; its full sequence is Uroporphyrinogen decarboxylase (346 aa).

Substrate contacts are provided by residues 26-30, aspartate 76, tyrosine 153, serine 208, and histidine 323; that span reads RQAGR.

It belongs to the uroporphyrinogen decarboxylase family. In terms of assembly, homodimer.

It localises to the cytoplasm. It carries out the reaction uroporphyrinogen III + 4 H(+) = coproporphyrinogen III + 4 CO2. Its pathway is porphyrin-containing compound metabolism; protoporphyrin-IX biosynthesis; coproporphyrinogen-III from 5-aminolevulinate: step 4/4. Functionally, catalyzes the decarboxylation of four acetate groups of uroporphyrinogen-III to yield coproporphyrinogen-III. The chain is Uroporphyrinogen decarboxylase from Prochlorococcus marinus (strain MIT 9312).